Here is a 275-residue protein sequence, read N- to C-terminus: 2,3,4,5-tetrahydropyridine-2,6-dicarboxylate N-succinyltransferase (275 aa).

Substrate-binding residues include Arg-108 and Asp-145.

It belongs to the transferase hexapeptide repeat family. Homotrimer.

It localises to the cytoplasm. The catalysed reaction is (S)-2,3,4,5-tetrahydrodipicolinate + succinyl-CoA + H2O = (S)-2-succinylamino-6-oxoheptanedioate + CoA. It functions in the pathway amino-acid biosynthesis; L-lysine biosynthesis via DAP pathway; LL-2,6-diaminopimelate from (S)-tetrahydrodipicolinate (succinylase route): step 1/3. In Roseobacter denitrificans (strain ATCC 33942 / OCh 114) (Erythrobacter sp. (strain OCh 114)), this protein is 2,3,4,5-tetrahydropyridine-2,6-dicarboxylate N-succinyltransferase.